We begin with the raw amino-acid sequence, 606 residues long: Dihydroxy-acid dehydratase ilvC, mitochondrial (606 aa).

Residue C84 coordinates [2Fe-2S] cluster. D116 serves as a coordination point for Mg(2+). Position 157 (C157) interacts with [2Fe-2S] cluster. D158 is a binding site for Mg(2+). Position 232 (C232) interacts with [2Fe-2S] cluster. Residue E485 participates in Mg(2+) binding. S511 functions as the Proton acceptor in the catalytic mechanism.

Belongs to the IlvD/Edd family. [2Fe-2S] cluster is required as a cofactor. Mg(2+) serves as cofactor.

Its subcellular location is the mitochondrion. The catalysed reaction is (2R)-2,3-dihydroxy-3-methylbutanoate = 3-methyl-2-oxobutanoate + H2O. It carries out the reaction (2R,3R)-2,3-dihydroxy-3-methylpentanoate = (S)-3-methyl-2-oxopentanoate + H2O. Its pathway is amino-acid biosynthesis; L-isoleucine biosynthesis; L-isoleucine from 2-oxobutanoate: step 3/4. It participates in amino-acid biosynthesis; L-valine biosynthesis; L-valine from pyruvate: step 3/4. With respect to regulation, DHAD activity is inhibited in dose-dependent manner by 2-hydroxy-3-methylbutyric acid with an IC(50) of about 8 mM. Functionally, dihydroxyacid dehydratase that catalyzes the third step in the common pathway leading to biosynthesis of branched-chain amino acids. Catalyzes the dehydration of (2R,3R)-2,3-dihydroxy-3-methylpentanoate (2,3-dihydroxy-3-methylvalerate) into 2-oxo-3-methylpentanoate (2-oxo-3-methylvalerate) and of (2R)-2,3-dihydroxy-3-methylbutanoate (2,3-dihydroxyisovalerate) into 2-oxo-3-methylbutanoate (2-oxoisovalerate), the penultimate precursor to L-isoleucine and L-valine, respectively. IlvC and the branched-chain amino acid biosynthesis are crucial for virulence and may be a potential target to develop antifungal agents. This Aspergillus fumigatus (strain ATCC MYA-4609 / CBS 101355 / FGSC A1100 / Af293) (Neosartorya fumigata) protein is Dihydroxy-acid dehydratase ilvC, mitochondrial.